A 208-amino-acid polypeptide reads, in one-letter code: Pyridoxine/pyridoxamine 5'-phosphate oxidase (208 aa).

FMN-binding positions include 55-60, 70-71, Lys-76, Lys-77, and Gln-99; these read RMVLLK and YT. Lys-60 is a binding site for substrate. The substrate site is built by Tyr-117, Arg-121, and Ser-125. FMN-binding positions include 134–135 and Trp-179; that span reads QS. 185 to 187 is a binding site for substrate; sequence RLH. Position 189 (Arg-189) interacts with FMN.

The protein belongs to the pyridoxamine 5'-phosphate oxidase family. Homodimer. FMN serves as cofactor.

The enzyme catalyses pyridoxamine 5'-phosphate + O2 + H2O = pyridoxal 5'-phosphate + H2O2 + NH4(+). It catalyses the reaction pyridoxine 5'-phosphate + O2 = pyridoxal 5'-phosphate + H2O2. It participates in cofactor metabolism; pyridoxal 5'-phosphate salvage; pyridoxal 5'-phosphate from pyridoxamine 5'-phosphate: step 1/1. Its pathway is cofactor metabolism; pyridoxal 5'-phosphate salvage; pyridoxal 5'-phosphate from pyridoxine 5'-phosphate: step 1/1. Catalyzes the oxidation of either pyridoxine 5'-phosphate (PNP) or pyridoxamine 5'-phosphate (PMP) into pyridoxal 5'-phosphate (PLP). The protein is Pyridoxine/pyridoxamine 5'-phosphate oxidase of Brucella abortus biovar 1 (strain 9-941).